The chain runs to 427 residues: Enolase (427 aa).

A (2R)-2-phosphoglycerate-binding site is contributed by Gln-163. The active-site Proton donor is Glu-205. Positions 242, 285, and 312 each coordinate Mg(2+). Residues Lys-337, Arg-366, Ser-367, and Lys-388 each contribute to the (2R)-2-phosphoglycerate site. Lys-337 functions as the Proton acceptor in the catalytic mechanism.

The protein belongs to the enolase family. Requires Mg(2+) as cofactor.

It localises to the cytoplasm. It is found in the secreted. Its subcellular location is the cell surface. It carries out the reaction (2R)-2-phosphoglycerate = phosphoenolpyruvate + H2O. The protein operates within carbohydrate degradation; glycolysis; pyruvate from D-glyceraldehyde 3-phosphate: step 4/5. Functionally, catalyzes the reversible conversion of 2-phosphoglycerate (2-PG) into phosphoenolpyruvate (PEP). It is essential for the degradation of carbohydrates via glycolysis. This chain is Enolase, found in Nitrosospira multiformis (strain ATCC 25196 / NCIMB 11849 / C 71).